We begin with the raw amino-acid sequence, 102 residues long: Putative pterin-4-alpha-carbinolamine dehydratase (102 aa).

It belongs to the pterin-4-alpha-carbinolamine dehydratase family.

The catalysed reaction is (4aS,6R)-4a-hydroxy-L-erythro-5,6,7,8-tetrahydrobiopterin = (6R)-L-erythro-6,7-dihydrobiopterin + H2O. The sequence is that of Putative pterin-4-alpha-carbinolamine dehydratase from Burkholderia multivorans (strain ATCC 17616 / 249).